The primary structure comprises 262 residues: Putative protein-methionine-sulfoxide reductase subunit YedZ1 (262 aa).

This sequence belongs to the MsrP family.

Part of the YedY1-YedZ1 system that may repair oxidized proteins containing methionine sulfoxide residues (Met-O). This chain is Putative protein-methionine-sulfoxide reductase subunit YedZ1, found in Azospira oryzae (strain ATCC BAA-33 / DSM 13638 / PS) (Dechlorosoma suillum).